A 524-amino-acid polypeptide reads, in one-letter code: Peptide chain release factor 3 (524 aa).

In terms of domain architecture, tr-type G spans 8-276 (NKRRTFAIIS…GFAKYAPAPE (269 aa)). Residues 17–24 (SHPDAGKT), 85–89 (DTPGH), and 139–142 (NKLD) contribute to the GTP site.

Belongs to the TRAFAC class translation factor GTPase superfamily. Classic translation factor GTPase family. PrfC subfamily.

It localises to the cytoplasm. Increases the formation of ribosomal termination complexes and stimulates activities of RF-1 and RF-2. It binds guanine nucleotides and has strong preference for UGA stop codons. It may interact directly with the ribosome. The stimulation of RF-1 and RF-2 is significantly reduced by GTP and GDP, but not by GMP. In Hydrogenovibrio crunogenus (strain DSM 25203 / XCL-2) (Thiomicrospira crunogena), this protein is Peptide chain release factor 3.